The sequence spans 278 residues: Achaete-scute homolog 5 (278 aa).

The segment at 1-66 (MPMGAAERGA…GPFGGGLALG (66 aa)) is disordered. Residues 155–207 (AFIQKRNERERQRVKCVNEGYARLRGHLPGALAEKRLSKVETLRAAIRYIKYL) form the bHLH domain. Positions 214 to 278 (APDGSTPPAS…PFLESEESWH (65 aa)) are disordered. A compositionally biased stretch (pro residues) spans 230–239 (GPCPAPPATP). Over residues 240–249 (RPDRPGDGEA) the composition is skewed to basic and acidic residues. A compositionally biased stretch (low complexity) spans 252 to 271 (PSSLVPESSESSCFSPSPFL).

In terms of assembly, interacts with transcription factor TCF3/E12.

It is found in the nucleus. Functionally, transcription factor. Probably binds E-box motifs 5'-CANNTG-3' in complex with transcription factor TCF3/E12. Negatively modulates transcription of target genes such as CDH1/E-cadherin, perhaps by recruiting the PRC2 repressive complex to regulatory elements. Regulates ameloblast development and tooth germ growth, perhaps acting by positively modulating migration of inner enamel epithelium (IEE) cells. Plays a role in enamel formation. This is Achaete-scute homolog 5 (ASCL5) from Homo sapiens (Human).